We begin with the raw amino-acid sequence, 328 residues long: Tyrosine--tRNA ligase (328 aa).

An L-tyrosine-binding site is contributed by Y33. The 'HIGH' region motif lies at P38 to H46. Positions 154, 158, 161, and 176 each coordinate L-tyrosine. Positions E193 to R227 are disordered. Residues K212–S216 carry the 'KMSKS' region motif. S215 is an ATP binding site.

This sequence belongs to the class-I aminoacyl-tRNA synthetase family. TyrS type 3 subfamily. As to quaternary structure, homodimer.

The protein localises to the cytoplasm. The enzyme catalyses tRNA(Tyr) + L-tyrosine + ATP = L-tyrosyl-tRNA(Tyr) + AMP + diphosphate + H(+). Catalyzes the attachment of tyrosine to tRNA(Tyr) in a two-step reaction: tyrosine is first activated by ATP to form Tyr-AMP and then transferred to the acceptor end of tRNA(Tyr). In Halorubrum lacusprofundi (strain ATCC 49239 / DSM 5036 / JCM 8891 / ACAM 34), this protein is Tyrosine--tRNA ligase.